The sequence spans 476 residues: Adenosylhomocysteinase (476 aa).

3 residues coordinate substrate: Thr-61, Asp-140, and Glu-200. 201-203 (TTT) contributes to the NAD(+) binding site. The substrate site is built by Lys-230 and Asp-234. NAD(+) is bound by residues Asn-235, 264–269 (GYGDVG), Glu-287, Asn-322, 343–345 (IGH), and Asn-389.

Belongs to the adenosylhomocysteinase family. It depends on NAD(+) as a cofactor.

The protein localises to the cytoplasm. It catalyses the reaction S-adenosyl-L-homocysteine + H2O = L-homocysteine + adenosine. The protein operates within amino-acid biosynthesis; L-homocysteine biosynthesis; L-homocysteine from S-adenosyl-L-homocysteine: step 1/1. Its function is as follows. May play a key role in the regulation of the intracellular concentration of adenosylhomocysteine. In Acidovorax ebreus (strain TPSY) (Diaphorobacter sp. (strain TPSY)), this protein is Adenosylhomocysteinase.